The primary structure comprises 392 residues: THO complex subunit MFT1 (392 aa).

Composition is skewed to acidic residues over residues 258 to 271 (DNIDEDYESDEDEE) and 290 to 330 (NVDE…EVDG). Residues 258–392 (DNIDEDYESD…SASSSVEEVK (135 aa)) form a disordered region. Residue Ser-266 is modified to Phosphoserine. A compositionally biased stretch (polar residues) spans 331–344 (ESSQQEDNSRQGNN). Over residues 345–367 (EETDKETGVIEEPDAVNDAEEAD) the composition is skewed to acidic residues. Residues 377 to 392 (GTTSDFSASSSVEEVK) are compositionally biased toward polar residues.

In terms of assembly, component of the THO complex, which is composed of HPR1, MFT1, THO2 and THP2. Together with SUB2, TEX1 and YRA1, THO forms the transcription/export (TREX) complex. THO associates with DNA and RNA in vitro.

It is found in the nucleus. In terms of biological role, component the THO subcomplex of the TREX complex, which operates in coupling transcription elongation to mRNA export. The THO complex is recruited to transcribed genes and moves along the gene with the elongating polymerase during transcription. THO is important for stabilizing nascent RNA in the RNA polymerase II elongation complex by preventing formation of DNA:RNA hybrids behind the elongating polymerase. It functions in cotranscriptional formation of an export-competent messenger ribonucleoprotein particle (mRNP) by facilitating the loading of ATP-dependent RNA helicase SUB2 and the mRNA export factor YRA1 along the nascent mRNA. In Saccharomyces cerevisiae (strain ATCC 204508 / S288c) (Baker's yeast), this protein is THO complex subunit MFT1 (MFT1).